We begin with the raw amino-acid sequence, 511 residues long: Alpha-amylase 1 (511 aa).

A signal peptide spans 1 to 15 (MKFFLLLSLIGFCWA). The residue at position 16 (glutamine 16) is a Pyrrolidone carboxylic acid. 3 cysteine pairs are disulfide-bonded: cysteine 43/cysteine 101, cysteine 85/cysteine 130, and cysteine 156/cysteine 175. Ca(2+)-binding residues include asparagine 115, arginine 173, and aspartate 182. Arginine 210 serves as a coordination point for chloride. Aspartate 212 functions as the Nucleophile in the catalytic mechanism. Histidine 216 lines the Ca(2+) pocket. Catalysis depends on glutamate 248, which acts as the Proton donor. Residues asparagine 313 and arginine 352 each contribute to the chloride site. Cystine bridges form between cysteine 393–cysteine 399 and cysteine 465–cysteine 477.

It belongs to the glycosyl hydrolase 13 family. As to quaternary structure, monomer. Ca(2+) is required as a cofactor. Chloride serves as cofactor. As to expression, expressed in liver and saliva.

It is found in the secreted. It carries out the reaction Endohydrolysis of (1-&gt;4)-alpha-D-glucosidic linkages in polysaccharides containing three or more (1-&gt;4)-alpha-linked D-glucose units.. This chain is Alpha-amylase 1 (Amy1), found in Mus musculus (Mouse).